Consider the following 80-residue polypeptide: uncharacterized protein (80 aa).

This is an uncharacterized protein from Escherichia coli (Bacteriophage T4).